We begin with the raw amino-acid sequence, 140 residues long: MKAVIAKNEEQLKDAFYVREEVFVKEQNVPAEEEIDELENESEHIVVYDGEKPVGAGRWRMKDGYGKLERICVLKSHRSAGVGGIIMKALEKAAADGGASGFILNAQTQAVPFYKKHGYRVLSEKEFLDAGIPHLQMMKD.

The N-acetyltransferase domain occupies 2-140 (KAVIAKNEEQ…GIPHLQMMKD (139 aa)).

It belongs to the acetyltransferase family.

This is an uncharacterized protein from Bacillus subtilis (strain 168).